A 447-amino-acid polypeptide reads, in one-letter code: Phosphoglucosamine mutase (447 aa).

Ser104 acts as the Phosphoserine intermediate in catalysis. 4 residues coordinate Mg(2+): Ser104, Asp243, Asp245, and Asp247. Ser104 carries the phosphoserine modification.

The protein belongs to the phosphohexose mutase family. Mg(2+) serves as cofactor. Post-translationally, activated by phosphorylation.

It catalyses the reaction alpha-D-glucosamine 1-phosphate = D-glucosamine 6-phosphate. Functionally, catalyzes the conversion of glucosamine-6-phosphate to glucosamine-1-phosphate. The polypeptide is Phosphoglucosamine mutase (Corynebacterium aurimucosum (strain ATCC 700975 / DSM 44827 / CIP 107346 / CN-1) (Corynebacterium nigricans)).